A 282-amino-acid chain; its full sequence is Bifunctional protein FolD (282 aa).

NADP(+)-binding positions include 164–166 (GRS) and Ser-189.

The protein belongs to the tetrahydrofolate dehydrogenase/cyclohydrolase family. As to quaternary structure, homodimer.

The catalysed reaction is (6R)-5,10-methylene-5,6,7,8-tetrahydrofolate + NADP(+) = (6R)-5,10-methenyltetrahydrofolate + NADPH. It catalyses the reaction (6R)-5,10-methenyltetrahydrofolate + H2O = (6R)-10-formyltetrahydrofolate + H(+). The protein operates within one-carbon metabolism; tetrahydrofolate interconversion. Its function is as follows. Catalyzes the oxidation of 5,10-methylenetetrahydrofolate to 5,10-methenyltetrahydrofolate and then the hydrolysis of 5,10-methenyltetrahydrofolate to 10-formyltetrahydrofolate. The chain is Bifunctional protein FolD from Lachnoclostridium phytofermentans (strain ATCC 700394 / DSM 18823 / ISDg) (Clostridium phytofermentans).